A 985-amino-acid chain; its full sequence is Serine/threonine-protein kinase N2 (985 aa).

An REM-1 1 domain is found at 33 to 109 (KLDFSDTIVQ…LQELNAHIVV (77 aa)). Position 77 is an N6-acetyllysine (K77). S110 carries the post-translational modification Phosphoserine. Residues 111–136 (DPEDYTDCPRTPDTPNSDSRSSTSNN) form a disordered region. 2 positions are modified to phosphothreonine: T121 and T124. Residues 121 to 136 (TPDTPNSDSRSSTSNN) are compositionally biased toward low complexity. REM-1 domains follow at residues 121 to 204 (TPDT…TNEL) and 207 to 286 (DNAK…ELPK). 4 positions are modified to phosphoserine: S303, S307, S361, and S363. A disordered region spans residues 352 to 383 (ATSVALPGWSPSENRSSFMSRTSKSKSGSSRN). The 121-residue stretch at 354-474 (SVALPGWSPS…LYLEPQGTLF (121 aa)) folds into the C2 domain. The span at 366 to 382 (RSSFMSRTSKSKSGSSR) shows a compositional bias: low complexity. A necessary to rescue apical junction formation region spans residues 383-464 (NLLKTDDLSN…FLDNQRHGMA (82 aa)). S536, S584, S621, and S632 each carry phosphoserine. A disordered region spans residues 570-590 (DLEPEAPPAPPRASSLGEIDD). One can recognise a Protein kinase domain in the interval 658–917 (FRCCAVLGRG…AEDVKKHPFF (260 aa)). ATP contacts are provided by residues 664 to 672 (LGRGHFGKV) and K687. D783 acts as the Proton acceptor in catalysis. A Phosphothreonine; by PDPK1 modification is found at T817. The tract at residues 918-978 (RLTDWSALLD…EEEQEMFRDF (61 aa)) is necessary for the catalytic activity. Residues 918-985 (RLTDWSALLD…RDFDYVADWC (68 aa)) enclose the AGC-kinase C-terminal domain. A Phosphoserine modification is found at S953. Residue T959 is modified to Phosphothreonine. The tract at residues 979 to 985 (DYVADWC) is negatively regulates the responsiveness of the catalytic activity by cardiolipin and is required for optimal activation by the GTP-bound RhoA.

The protein belongs to the protein kinase superfamily. AGC Ser/Thr protein kinase family. PKC subfamily. As to quaternary structure, interacts (via the REM repeats) with RHOA (GTP-bound form preferentially) and interacts (via the REM repeats) with RAC1 (GTP-bound form preferentially); the interactions induce its autophosphorylation. Interacts with RHOC. Interacts with NCK1 (via SH3 domains) and NCK2. Interacts with CD44. Interacts (via C-terminal kinase domain) with PDPK1; the interaction stimulates PDPK1 kinase activity. Interacts with MAP3K2; the interaction activates PRK2 kinase activity in a MAP3K2-independent kinase activity. Interacts (via C-terminal domain) with AKT1; the interaction occurs with the C-terminal cleavage product of PRK2 in apoptotic cells. Interacts (via C-terminus) with PTPN13 (via PDZ 3 domain). Interacts with CDK10. In terms of processing, phosphorylated during mitosis. Autophosphorylated. Phosphorylated. Binding to Rho and Rac promotes autophosphorylation and phosphorylation on serine and threonine residues. Phosphorylated by CDK10. Proteolytically cleaved by caspase-3 during the induction of apoptotic cell death. Activated by limited proteolysis with trypsin. Expressed in liver (at protein level).

It localises to the cytoplasm. Its subcellular location is the nucleus. The protein resides in the membrane. It is found in the cell projection. The protein localises to the lamellipodium. It localises to the cytoskeleton. Its subcellular location is the cleavage furrow. The protein resides in the midbody. It is found in the cell junction. The catalysed reaction is L-seryl-[protein] + ATP = O-phospho-L-seryl-[protein] + ADP + H(+). It catalyses the reaction L-threonyl-[protein] + ATP = O-phospho-L-threonyl-[protein] + ADP + H(+). Its activity is regulated as follows. Kinase activity is activated upon binding to GTP-bound Rho1/Rac1 GTPases. Activated by caspase-3 (CASP3) cleavage during apoptosis. Activated by lipids, particularly cardiolipin and to a lesser extent by other acidic phospholipids and unsaturated fatty acids. Two specific sites, Thr-817 (activation loop of the kinase domain) and Thr-959 (turn motif), need to be phosphorylated for its full activation. In terms of biological role, PKC-related serine/threonine-protein kinase and Rho/Rac effector protein that participates in specific signal transduction responses in the cell. Plays a role in the regulation of cell cycle progression, actin cytoskeleton assembly, cell migration, cell adhesion, tumor cell invasion and transcription activation signaling processes. Phosphorylates CTTN in hyaluronan-induced astrocytes and hence decreases CTTN ability to associate with filamentous actin. Phosphorylates HDAC5, therefore lead to impair HDAC5 import. Direct RhoA target required for the regulation of the maturation of primordial junctions into apical junction formation in bronchial epithelial cells. Required for G2/M phases of the cell cycle progression and abscission during cytokinesis in a ECT2-dependent manner. Stimulates FYN kinase activity that is required for establishment of skin cell-cell adhesion during keratinocytes differentiation. Regulates epithelial bladder cells speed and direction of movement during cell migration and tumor cell invasion. Inhibits Akt pro-survival-induced kinase activity. Mediates Rho protein-induced transcriptional activation via the c-fos serum response factor (SRF). Involved in the negative regulation of ciliogenesis. This chain is Serine/threonine-protein kinase N2 (Pkn2), found in Rattus norvegicus (Rat).